The following is a 319-amino-acid chain: Ribosomal protein L11 methyltransferase (319 aa).

Residues T165, G186, D208, and N251 each contribute to the S-adenosyl-L-methionine site.

It belongs to the methyltransferase superfamily. PrmA family.

It is found in the cytoplasm. The catalysed reaction is L-lysyl-[protein] + 3 S-adenosyl-L-methionine = N(6),N(6),N(6)-trimethyl-L-lysyl-[protein] + 3 S-adenosyl-L-homocysteine + 3 H(+). In terms of biological role, methylates ribosomal protein L11. The polypeptide is Ribosomal protein L11 methyltransferase (Limosilactobacillus reuteri subsp. reuteri (strain JCM 1112) (Lactobacillus reuteri)).